We begin with the raw amino-acid sequence, 446 residues long: Putative hydrolase YbfO (446 aa).

The first 28 residues, 1–28 (MKRMIVRMTLPLLIVCLAFSSFSASARA), serve as a signal peptide directing secretion.

This chain is Putative hydrolase YbfO (ybfO), found in Bacillus subtilis (strain 168).